A 459-amino-acid chain; its full sequence is Ribulose bisphosphate carboxylase (459 aa).

N111 serves as a coordination point for substrate. K166 (proton acceptor) is an active-site residue. Residue K168 coordinates substrate. Positions 191, 193, and 194 each coordinate Mg(2+). N6-carboxylysine is present on K191. H287 serves as the catalytic Proton acceptor. R288, H321, and S368 together coordinate substrate.

Belongs to the RuBisCO large chain family. Type II subfamily. As to quaternary structure, the complex is approximately 350 kDa when isolated from either T.denitrificans or R.sphaeroides, suggesting a homohexamer or homooctamer structure. It depends on Mg(2+) as a cofactor.

It catalyses the reaction 2 (2R)-3-phosphoglycerate + 2 H(+) = D-ribulose 1,5-bisphosphate + CO2 + H2O. It carries out the reaction D-ribulose 1,5-bisphosphate + O2 = 2-phosphoglycolate + (2R)-3-phosphoglycerate + 2 H(+). Functionally, ruBisCO catalyzes two reactions: the carboxylation of D-ribulose 1,5-bisphosphate, the primary event in carbon dioxide fixation, as well as the oxidative fragmentation of the pentose substrate. Both reactions occur simultaneously and in competition at the same active site. This chain is Ribulose bisphosphate carboxylase (cbbM), found in Thiobacillus denitrificans (strain ATCC 25259 / T1).